The chain runs to 310 residues: Ribosome production factor 2 homolog (310 aa).

A Brix domain is found at 29 to 239 (KKTLILHGTK…VRRHRYPVES (211 aa)). Residues 281–310 (LSNDVKGLKRERREAKKNKDHSKKQKINPE) form a disordered region. A compositionally biased stretch (basic residues) spans 295 to 310 (AKKNKDHSKKQKINPE).

Belongs to the RPF2 family.

The protein localises to the nucleus. The protein resides in the nucleolus. The sequence is that of Ribosome production factor 2 homolog from Oryza sativa subsp. japonica (Rice).